The sequence spans 661 residues: Putative core protein L410 (661 aa).

Over residues 1-11 the composition is skewed to basic and acidic residues; sequence MADNKGRRDTF. The tract at residues 1 to 26 is disordered; the sequence is MADNKGRRDTFDVSGDTNTNATSNKR. The span at 15–25 shows a compositional bias: polar residues; that stretch reads GDTNTNATSNK. Residues 112–140 adopt a coiled-coil conformation; that stretch reads KKENKWSDKEYDEFRKELTNLLTGNRALE.

The protein localises to the virion. This Acanthamoeba polyphaga (Amoeba) protein is Putative core protein L410.